A 316-amino-acid polypeptide reads, in one-letter code: Transaldolase (316 aa).

The Schiff-base intermediate with substrate role is filled by Lys-132.

It belongs to the transaldolase family. Type 1 subfamily. In terms of assembly, homodimer.

It localises to the cytoplasm. It catalyses the reaction D-sedoheptulose 7-phosphate + D-glyceraldehyde 3-phosphate = D-erythrose 4-phosphate + beta-D-fructose 6-phosphate. It functions in the pathway carbohydrate degradation; pentose phosphate pathway; D-glyceraldehyde 3-phosphate and beta-D-fructose 6-phosphate from D-ribose 5-phosphate and D-xylulose 5-phosphate (non-oxidative stage): step 2/3. Its function is as follows. Transaldolase is important for the balance of metabolites in the pentose-phosphate pathway. This is Transaldolase from Methylobacillus flagellatus (strain ATCC 51484 / DSM 6875 / VKM B-1610 / KT).